Here is a 455-residue protein sequence, read N- to C-terminus: EP1-like glycoprotein 2 (455 aa).

A signal peptide spans 1–22 (MSRFAILVTLALAIATVSVVIA). In terms of domain architecture, Bulb-type lectin spans 44–163 (EYDASYRFIE…NGKFVWQSFD (120 aa)). N-linked (GlcNAc...) asparagine glycans are attached at residues Asn56, Asn106, Asn191, Asn211, Asn241, and Asn289. S-nitrosocysteine is present on Cys374. In terms of domain architecture, PAN spans 374–455 (CSGVKGKTVN…NTSSVAYIKY (82 aa)). 2 disulfide bridges follow: Cys410-Cys432 and Cys414-Cys420. An N-linked (GlcNAc...) asparagine glycan is attached at Asn446.

It is found in the secreted. Its subcellular location is the cell wall. This Arabidopsis thaliana (Mouse-ear cress) protein is EP1-like glycoprotein 2.